The chain runs to 324 residues: MRRAARASAPGKVIIVGEHFVVRGSLAIVAAIGRRLRVTVRSGGKGIVLESSMLGRHSAPLPGQGAAAKVSPVLEPYIAVLRSLAARGYSVVPHTILVESGIPPRAGLGSSAASMVAYALSYSAMHGDPLSAEDLYSVAMEGEKIAHGKPSGVDVTIAVRGGVLAYRRGENPVDIRPGLTGVTLLVADTGVERRTRDVVEHVLSIADALGEASTYIYRAADLIAREALHAIEKGDAERLGLIMNAAQGLLSSLGASSLEIETLVYRMRSAGALGAKLTGAGWGGCVIGLFKEGEVERGLESVVESSSQAFTASIAEEGARLEEF.

103–113 (PPRAGLGSSAA) is a binding site for ATP. Asp-154 (proton acceptor) is an active-site residue.

This sequence belongs to the GHMP kinase family. Mevalonate kinase subfamily. In terms of assembly, homodimer. Requires Mg(2+) as cofactor.

It is found in the cytoplasm. It catalyses the reaction (R)-mevalonate + ATP = (R)-5-phosphomevalonate + ADP + H(+). It participates in isoprenoid biosynthesis; isopentenyl diphosphate biosynthesis via mevalonate pathway; isopentenyl diphosphate from (R)-mevalonate: step 1/3. Catalyzes the phosphorylation of (R)-mevalonate (MVA) to (R)-mevalonate 5-phosphate (MVAP). Functions in the mevalonate (MVA) pathway leading to isopentenyl diphosphate (IPP), a key precursor for the biosynthesis of isoprenoid compounds such as archaeal membrane lipids. In Aeropyrum pernix (strain ATCC 700893 / DSM 11879 / JCM 9820 / NBRC 100138 / K1), this protein is Mevalonate kinase.